A 1059-amino-acid polypeptide reads, in one-letter code: Mitogen-activated protein kinase kinase kinase mlk-1 (1059 aa).

Residues 1-66 (MEQASVPSYV…ESSQVSRESP (66 aa)) are disordered. The segment covering 38 to 48 (DTTTASTSTDS) has biased composition (low complexity). Residues 69–130 (RASKAFVASY…PSNYAREVTY (62 aa)) form the SH3 domain. The Protein kinase domain maps to 150–454 (TLSDCQIGHG…TLAISFKQYA (305 aa)). ATP-binding positions include 156–164 (IGHGATATV) and Lys193. A coiled-coil region spans residues 199 to 224 (ASNFRADVVSTDEQLEQLKREANLVN). The active-site Proton acceptor is Asp297. Residue Ser355 is modified to Phosphoserine; by max-2 and tpa-1. 2 disordered regions span residues 617 to 699 (PVVS…QTTR) and 714 to 808 (RAQS…SSSD). Over residues 623–633 (MDDSNTFSTID) the composition is skewed to polar residues. Basic and acidic residues-rich tracts occupy residues 639–648 (DPNHSKESKK) and 662–674 (NKRD…DERA). Residues 678-689 (SISSRSSSTTSS) show a composition bias toward low complexity. The segment covering 690 to 699 (NRLITGQTTR) has biased composition (polar residues). A compositionally biased stretch (basic and acidic residues) spans 749-759 (RYVKDLEKDTP). Polar residues-rich tracts occupy residues 774–790 (LDQT…SINN) and 798–808 (SRRTTANSSSD). The NPQY motif motif lies at 937 to 940 (NPQY). Tyr940 bears the Phosphotyrosine mark.

It belongs to the protein kinase superfamily. STE Ser/Thr protein kinase family. MAP kinase kinase kinase subfamily. Interacts with max-2; the interaction is independent of max-2 and mlk-1 kinase activities. May interact (via NPQY motif when phosphorylated on tyrosine residue) with shc-1 (via PID domain); the interaction may facilitate mek-1 phosphorylation by bringing mlk-1 and mek-1 together. Interacts with svh-2 (via cytoplasmic domain). Interacts with tpa-1. It depends on Mg(2+) as a cofactor. May be phosphorylated on tyrosine residues by svh-2. In terms of processing, may be ubiquitinated and targeted for proteasomal degradation by E3 ubiquitin ligase rpm-1. As to expression, expressed in pharynx, intestine, hypodermis, neurons and body muscles.

It catalyses the reaction L-seryl-[protein] + ATP = O-phospho-L-seryl-[protein] + ADP + H(+). It carries out the reaction L-threonyl-[protein] + ATP = O-phospho-L-threonyl-[protein] + ADP + H(+). Its activity is regulated as follows. Activated by phosphorylation at Ser-355. May be activated by svh-2-mediated phosphorylation. Serine/threonine-protein kinase which, by phosphorylating and activating mek-1, plays an important role in the activation of the JNK pathway composed of mlk-1, mek-1 and kgb-1. Involved in the response to environmental stress such as heavy metals. By activating the JNK pathway downstream of tyrosine receptor svh-2, plays a role in axon regeneration after injury. The sequence is that of Mitogen-activated protein kinase kinase kinase mlk-1 from Caenorhabditis elegans.